The sequence spans 42 residues: Potassium channel toxin gamma-KTx 1.2 (42 aa).

4 cysteine pairs are disulfide-bonded: cysteine 5–cysteine 23, cysteine 11–cysteine 34, cysteine 20–cysteine 39, and cysteine 24–cysteine 41.

This sequence belongs to the ergtoxin family. Gamma-KTx 1 subfamily. In terms of tissue distribution, expressed by the venom gland.

It localises to the secreted. Its function is as follows. Blocks Kv11/ERG potassium channels. This chain is Potassium channel toxin gamma-KTx 1.2, found in Centruroides elegans (Bark scorpion).